The following is a 347-amino-acid chain: UDP-3-O-acylglucosamine N-acyltransferase (347 aa).

H240 acts as the Proton acceptor in catalysis.

The protein belongs to the transferase hexapeptide repeat family. LpxD subfamily. As to quaternary structure, homotrimer.

The catalysed reaction is a UDP-3-O-[(3R)-3-hydroxyacyl]-alpha-D-glucosamine + a (3R)-hydroxyacyl-[ACP] = a UDP-2-N,3-O-bis[(3R)-3-hydroxyacyl]-alpha-D-glucosamine + holo-[ACP] + H(+). Its pathway is bacterial outer membrane biogenesis; LPS lipid A biosynthesis. In terms of biological role, catalyzes the N-acylation of UDP-3-O-acylglucosamine using 3-hydroxyacyl-ACP as the acyl donor. Is involved in the biosynthesis of lipid A, a phosphorylated glycolipid that anchors the lipopolysaccharide to the outer membrane of the cell. In Hydrogenovibrio crunogenus (strain DSM 25203 / XCL-2) (Thiomicrospira crunogena), this protein is UDP-3-O-acylglucosamine N-acyltransferase.